Here is a 107-residue protein sequence, read N- to C-terminus: Thiosulfate sulfurtransferase GlpE (107 aa).

Positions 19–107 (KDHNARMVDI…WNKAGLPVEK (89 aa)) constitute a Rhodanese domain. Cys-67 acts as the Cysteine persulfide intermediate in catalysis.

This sequence belongs to the GlpE family.

It is found in the cytoplasm. It catalyses the reaction thiosulfate + hydrogen cyanide = thiocyanate + sulfite + 2 H(+). The enzyme catalyses thiosulfate + [thioredoxin]-dithiol = [thioredoxin]-disulfide + hydrogen sulfide + sulfite + 2 H(+). Transferase that catalyzes the transfer of sulfur from thiosulfate to thiophilic acceptors such as cyanide or dithiols. May function in a CysM-independent thiosulfate assimilation pathway by catalyzing the conversion of thiosulfate to sulfite, which can then be used for L-cysteine biosynthesis. This chain is Thiosulfate sulfurtransferase GlpE, found in Aliivibrio salmonicida (strain LFI1238) (Vibrio salmonicida (strain LFI1238)).